The following is a 418-amino-acid chain: Serine--tRNA ligase (418 aa).

L-serine is bound at residue 231–233; the sequence is TAE. 262 to 264 lines the ATP pocket; sequence RRE. Glu285 contributes to the L-serine binding site. 349–352 contributes to the ATP binding site; it reads EISS. Ser384 serves as a coordination point for L-serine.

It belongs to the class-II aminoacyl-tRNA synthetase family. Type-1 seryl-tRNA synthetase subfamily. As to quaternary structure, homodimer. The tRNA molecule binds across the dimer.

It is found in the cytoplasm. The enzyme catalyses tRNA(Ser) + L-serine + ATP = L-seryl-tRNA(Ser) + AMP + diphosphate + H(+). It carries out the reaction tRNA(Sec) + L-serine + ATP = L-seryl-tRNA(Sec) + AMP + diphosphate + H(+). It functions in the pathway aminoacyl-tRNA biosynthesis; selenocysteinyl-tRNA(Sec) biosynthesis; L-seryl-tRNA(Sec) from L-serine and tRNA(Sec): step 1/1. Its function is as follows. Catalyzes the attachment of serine to tRNA(Ser). Is also able to aminoacylate tRNA(Sec) with serine, to form the misacylated tRNA L-seryl-tRNA(Sec), which will be further converted into selenocysteinyl-tRNA(Sec). This chain is Serine--tRNA ligase, found in Coprothermobacter proteolyticus (strain ATCC 35245 / DSM 5265 / OCM 4 / BT).